We begin with the raw amino-acid sequence, 258 residues long: Indole-3-glycerol phosphate synthase (258 aa).

It belongs to the TrpC family.

The enzyme catalyses 1-(2-carboxyphenylamino)-1-deoxy-D-ribulose 5-phosphate + H(+) = (1S,2R)-1-C-(indol-3-yl)glycerol 3-phosphate + CO2 + H2O. It functions in the pathway amino-acid biosynthesis; L-tryptophan biosynthesis; L-tryptophan from chorismate: step 4/5. In Geobacillus sp. (strain WCH70), this protein is Indole-3-glycerol phosphate synthase.